The primary structure comprises 579 residues: Folliculin (579 aa).

The interval 32 to 52 is disordered; sequence GASCGDSIGQGEQAEDEEMGI. A uDENN FLCN/SMCR8-type domain is found at 86–242; sequence RSLAAGHPGY…RNGNAARSLT (157 aa). Residues 337–491 enclose the cDENN FLCN/SMCR8-type domain; that stretch reads NMVQRRMGVF…ILNKIEAALS (155 aa). A dDENN FLCN/SMCR8-type domain is found at 493-558; the sequence is ENLSMDVVDQ…LLKFWMTGLS (66 aa).

It belongs to the folliculin family. In terms of assembly, component of the lysosomal folliculin complex (LFC).

It is found in the lysosome membrane. The protein localises to the cytoplasm. It localises to the cytosol. The protein resides in the cell projection. Its subcellular location is the cilium. It is found in the cytoskeleton. The protein localises to the microtubule organizing center. It localises to the centrosome. The protein resides in the spindle. Its subcellular location is the nucleus. GTPase-activating activity is inhibited in the folliculin complex (LFC), which stabilizes the GDP-bound state of RagA/RRAGA (or RagB/RRAGB), because Arg-164 is located far from the RagC/RRAGC or RagD/RRAGD nucleotide pocket. Disassembly of the LFC complex upon amino acid restimulation liberates the GTPase-activating activity. Its function is as follows. Multi-functional protein, involved in both the cellular response to amino acid availability and in the regulation of glycolysis. GTPase-activating protein that plays a key role in the cellular response to amino acid availability through regulation of the non-canonical mTORC1 signaling cascade controlling the MiT/TFE factors tfeb and tfe3. Activates mTORC1 by acting as a GTPase-activating protein: specifically stimulates GTP hydrolysis by RagC/RRAGC or RagD/RRAGD, promoting the conversion to the GDP-bound state of RagC/RRAGC or RagD/RRAGD, and thereby activating the kinase activity of mTORC1. The GTPase-activating activity is inhibited during starvation and activated in presence of nutrients. Acts as a key component for non-canonical mTORC1-dependent control of the MiT/TFE factors tfeb and tfe3, while it is not involved in mTORC1-dependent phosphorylation of canonical RPS6KB1/S6K1 and EIF4EBP1/4E-BP1. In low-amino acid conditions, the lysosomal folliculin complex (LFC) is formed on the membrane of lysosomes, which inhibits the GTPase-activating activity of flcn, inactivates mTORC1 and maximizes nuclear translocation of tfeb and tfe3. Upon amino acid restimulation, RagA/RRAGA (or RagB/RRAGB) nucleotide exchange promotes disassembly of the LFC complex and liberates the GTPase-activating activity of flcn, leading to activation of mTORC1 and subsequent cytoplasmic retention of tfeb and tfe3. Required for the exit of hematopoietic stem cell from pluripotency by promoting mTOR-dependent cytoplasmic retention of tfe3, thereby increasing Wnt signaling. Acts as an inhibitor of browning of adipose tissue by regulating mTOR-dependent cytoplasmic retention of tfe3. In response to flow stress, regulates STK11/LKB1 accumulation and mTORC1 activation through primary cilia. Required for starvation-induced perinuclear clustering of lysosomes by promoting association of rilp with its effector rab34. Involved in the control of embryonic stem cells differentiation; together with lamtor1 it is necessary to recruit and activate RagC/RRAGC and RagD/RRAGD at the lysosomes, and to induce exit of embryonic stem cells from pluripotency via non-canonical, mTOR-independent tfe3 inactivation. Regulates glycolysis by binding to lactate dehydrogenase ldha, acting as an uncompetitive inhibitor. In Xenopus tropicalis (Western clawed frog), this protein is Folliculin.